The chain runs to 146 residues: uncharacterized protein (146 aa).

Residues 119-128 show a composition bias toward basic and acidic residues; that stretch reads AQADLEHEES. A disordered region spans residues 119-146; it reads AQADLEHEESASIDQDEMVAIETRKTKK.

This is an uncharacterized protein from Schizosaccharomyces pombe (strain 972 / ATCC 24843) (Fission yeast).